A 242-amino-acid chain; its full sequence is Small ribosomal subunit protein uS2 (242 aa).

This sequence belongs to the universal ribosomal protein uS2 family.

The polypeptide is Small ribosomal subunit protein uS2 (Vibrio vulnificus (strain CMCP6)).